Consider the following 102-residue polypeptide: Small ribosomal subunit protein uS10 (102 aa).

The protein belongs to the universal ribosomal protein uS10 family. In terms of assembly, part of the 30S ribosomal subunit.

In terms of biological role, involved in the binding of tRNA to the ribosomes. The sequence is that of Small ribosomal subunit protein uS10 from Thermoanaerobacter pseudethanolicus (strain ATCC 33223 / 39E) (Clostridium thermohydrosulfuricum).